Reading from the N-terminus, the 240-residue chain is MGNILLQLLAVVALCIAPARSDWLPGTATFYGGADGSGTMGGACGYGNLYDQRYGINNAALSTPLFNDGASCGQCYLIICDYGKAPDWCKLGKAITVTGTNYGGWCNATRPYFDMSQPAWENIGIYSAGIVPILYQQVKCWRYGGVRFIINGFNYFELVLVTNMAGSGSIVSMSVKGSCTGWIQMTRNWGANWQCLAGLAGQALSFNVTSTGGQTIVFDDAVPAGWSFGQTFSTYHQFDY.

Positions 1–21 (MGNILLQLLAVVALCIAPARS) are cleaved as a signal peptide. The 105-residue stretch at 41 to 145 (GGACGYGNLY…QQVKCWRYGG (105 aa)) folds into the Expansin-like EG45 domain. Asn-107 and Asn-207 each carry an N-linked (GlcNAc...) asparagine glycan. Residues 155 to 234 (YFELVLVTNM…GWSFGQTFST (80 aa)) enclose the Expansin-like CBD domain.

This sequence belongs to the expansin family. Expansin A subfamily.

It is found in the secreted. The protein localises to the cell wall. It localises to the membrane. Functionally, may cause loosening and extension of plant cell walls by disrupting non-covalent bonding between cellulose microfibrils and matrix glucans. No enzymatic activity has been found. May be required for rapid internodal elongation in deepwater rice during submergence. This chain is Expansin-A20 (EXPA20), found in Oryza sativa subsp. japonica (Rice).